Reading from the N-terminus, the 803-residue chain is MKLIAIVGTNAKQSYNRILLQFMKRHFVQKADIDIMEIANVPMFNETEDQTDLPAIQNFNTKISQADGVIIATPEHNHTIPSSLNSLLEWLSFKVHPLDGKPLMIVGASYDVQGSSRAQLHLRQILDAPGVNAAVMPGSEFLLGRAHQAFDEAGNLKSEATVDFLESCFFKFLRFVQVANQLNEPEEVSFEAGTYQVTTQGHNGKLPMTVTLSEEKIEKIDIDSSGESSGIADIVFTRIPNEILEGQTLNVDAVSGASVTSNGVLDGVARAIKLAGGNPDVLRKRPKAPSALDKEDKTYSTDVVIVGGGGAGLAAAARVLQAGKQVMVLEKFPALGGNTVRSGGLLNAADPEWQKTFPANPGEAHNLSELIQTDEDSIAAEYLADFKELKQQVTNYLKDPSYLFDSNILHRIQTYIGGKRTDRNGCEVYGNYDLVKVLTDKDLDSVHWLADIGVDFDRSEVSMPVGALWRRSHKPKQPMGYAFIEALDTYIRKNSGTILTDTAVTDFILENGLIKGVLAKGRNGQTITVHAQAVVLASGGFGANTKMLQQYNTYWSNIDDNIQTTNSPAITGDGIRLGQSIGAALVGMGFSQMMPVSDPNTGAIFSGLQVPPANFVMVNQEGKRFVDEYGSRDTLSKAAIDNGGLFYLIADENIKATAMNTSNEKIEEQVAAGTLYRADTLESLAEQIGVDPATLVETINNYNSYVEAGYDPEFDKGAFDLKVEKAPFYATPRKPATHHTMGGLKIDTQAHVIKEDGNKIPSLYAAGEVTGGIHAGNRLGGNALADIFTFGRIAAETAVTECC.

Residue S258 is modified to FMN phosphoryl serine. The FAD site is built by A311, E330, N338, T339, G343, G344, and D573. The active-site Proton donor is R632. Residues H739, E768, A783, and L784 each coordinate FAD.

Belongs to the FAD-dependent oxidoreductase 2 family. FRD/SDH subfamily. FAD is required as a cofactor. Requires FMN as cofactor.

It catalyses the reaction dihydrourocanate + A = urocanate + AH2. Its function is as follows. Catalyzes the two-electron reduction of urocanate to dihydrourocanate (also named imidazole propionate or deamino-histidine). Dihydrourocanate is present at higher concentrations in subjects with type 2 diabetes, and directly impairs glucose tolerance and insulin signaling at the level of insulin receptor substrate (IRS) through activation of p38 gamma (MAPK12)-p62-mTORC1. Therefore, the UrdA enzyme from the gut bacteria S.mutans strain UA159 may contribute to the pathogenesis of type 2 diabetes by producing the microbial metabolite dihydrourocanate. This is Urocanate reductase from Streptococcus mutans serotype c (strain ATCC 700610 / UA159).